Consider the following 323-residue polypeptide: DNA repair and recombination protein RadA (323 aa).

Residue 115–122 (GEFGSGKT) coordinates ATP.

Belongs to the eukaryotic RecA-like protein family.

In terms of biological role, involved in DNA repair and in homologous recombination. Binds and assemble on single-stranded DNA to form a nucleoprotein filament. Hydrolyzes ATP in a ssDNA-dependent manner and promotes DNA strand exchange between homologous DNA molecules. The sequence is that of DNA repair and recombination protein RadA from Thermoplasma volcanium (strain ATCC 51530 / DSM 4299 / JCM 9571 / NBRC 15438 / GSS1).